Reading from the N-terminus, the 313-residue chain is HPr kinase/phosphorylase (313 aa).

Catalysis depends on residues His140 and Lys161. An ATP-binding site is contributed by 155–162 (GNSGAGKS). Mg(2+) is bound at residue Ser162. Asp179 (proton acceptor; for phosphorylation activity. Proton donor; for dephosphorylation activity) is an active-site residue. The tract at residues 203-212 (IEVRGLGILN) is important for the catalytic mechanism of both phosphorylation and dephosphorylation. Glu204 serves as a coordination point for Mg(2+). Residue Arg246 is part of the active site. An important for the catalytic mechanism of dephosphorylation region spans residues 267 to 272 (PVAAGR).

The protein belongs to the HPrK/P family. As to quaternary structure, homohexamer. The cofactor is Mg(2+).

The catalysed reaction is [HPr protein]-L-serine + ATP = [HPr protein]-O-phospho-L-serine + ADP + H(+). The enzyme catalyses [HPr protein]-O-phospho-L-serine + phosphate + H(+) = [HPr protein]-L-serine + diphosphate. In terms of biological role, catalyzes the ATP- as well as the pyrophosphate-dependent phosphorylation of a specific serine residue in HPr, a phosphocarrier protein of the phosphoenolpyruvate-dependent sugar phosphotransferase system (PTS). HprK/P also catalyzes the pyrophosphate-producing, inorganic phosphate-dependent dephosphorylation (phosphorolysis) of seryl-phosphorylated HPr (P-Ser-HPr). This is HPr kinase/phosphorylase from Aromatoleum aromaticum (strain DSM 19018 / LMG 30748 / EbN1) (Azoarcus sp. (strain EbN1)).